The following is a 264-amino-acid chain: tRNA (guanine-N(1)-)-methyltransferase (264 aa).

S-adenosyl-L-methionine-binding positions include Gly125 and Leu145 to Leu150.

The protein belongs to the RNA methyltransferase TrmD family. In terms of assembly, homodimer.

Its subcellular location is the cytoplasm. It carries out the reaction guanosine(37) in tRNA + S-adenosyl-L-methionine = N(1)-methylguanosine(37) in tRNA + S-adenosyl-L-homocysteine + H(+). In terms of biological role, specifically methylates guanosine-37 in various tRNAs. In Burkholderia ambifaria (strain ATCC BAA-244 / DSM 16087 / CCUG 44356 / LMG 19182 / AMMD) (Burkholderia cepacia (strain AMMD)), this protein is tRNA (guanine-N(1)-)-methyltransferase.